The primary structure comprises 170 residues: NADH-quinone oxidoreductase subunit B (170 aa).

Residues C42, C43, C107, and C136 each contribute to the [4Fe-4S] cluster site.

It belongs to the complex I 20 kDa subunit family. NDH-1 is composed of 14 different subunits. Subunits NuoB, C, D, E, F, and G constitute the peripheral sector of the complex. It depends on [4Fe-4S] cluster as a cofactor.

It localises to the cell inner membrane. It carries out the reaction a quinone + NADH + 5 H(+)(in) = a quinol + NAD(+) + 4 H(+)(out). Functionally, NDH-1 shuttles electrons from NADH, via FMN and iron-sulfur (Fe-S) centers, to quinones in the respiratory chain. The immediate electron acceptor for the enzyme in this species is believed to be ubiquinone. Couples the redox reaction to proton translocation (for every two electrons transferred, four hydrogen ions are translocated across the cytoplasmic membrane), and thus conserves the redox energy in a proton gradient. This Campylobacter curvus (strain 525.92) protein is NADH-quinone oxidoreductase subunit B.